The primary structure comprises 217 residues: Pyridoxine/pyridoxamine 5'-phosphate oxidase (217 aa).

Substrate contacts are provided by residues 13 to 16 (RRDY) and Lys-71. Residues 66-71 (RIVLLK), 81-82 (YT), Lys-88, and Gln-110 contribute to the FMN site. Residues Tyr-128, Arg-132, and Ser-136 each coordinate substrate. Residues 145–146 (QS) and Trp-190 contribute to the FMN site. 196–198 (RLH) contacts substrate. Arg-200 is a binding site for FMN.

The protein belongs to the pyridoxamine 5'-phosphate oxidase family. Homodimer. It depends on FMN as a cofactor.

It carries out the reaction pyridoxamine 5'-phosphate + O2 + H2O = pyridoxal 5'-phosphate + H2O2 + NH4(+). The catalysed reaction is pyridoxine 5'-phosphate + O2 = pyridoxal 5'-phosphate + H2O2. Its pathway is cofactor metabolism; pyridoxal 5'-phosphate salvage; pyridoxal 5'-phosphate from pyridoxamine 5'-phosphate: step 1/1. It participates in cofactor metabolism; pyridoxal 5'-phosphate salvage; pyridoxal 5'-phosphate from pyridoxine 5'-phosphate: step 1/1. Catalyzes the oxidation of either pyridoxine 5'-phosphate (PNP) or pyridoxamine 5'-phosphate (PMP) into pyridoxal 5'-phosphate (PLP). The polypeptide is Pyridoxine/pyridoxamine 5'-phosphate oxidase (Edwardsiella ictaluri (strain 93-146)).